Reading from the N-terminus, the 262-residue chain is Small ribosomal subunit protein uS2 (262 aa).

Belongs to the universal ribosomal protein uS2 family.

This chain is Small ribosomal subunit protein uS2, found in Borrelia garinii subsp. bavariensis (strain ATCC BAA-2496 / DSM 23469 / PBi) (Borreliella bavariensis).